The primary structure comprises 509 residues: Ribonuclease E/G-like protein (509 aa).

Positions 35-117 (SDIYLGCVDK…LTANITLSGR (83 aa)) constitute an S1 motif domain. The Mg(2+) site is built by Asp-296 and Asp-339.

Belongs to the RNase E/G family. Requires Mg(2+) as cofactor.

The protein resides in the plastid. It localises to the chloroplast stroma. Its function is as follows. Involved in intercistronic processing of primary transcripts from chloroplast operons. The endonucleolytic activity of the enzyme depends on the number of phosphates at the 5' end, is inhibited by structured RNA, and preferentially cleaves A/U-rich sequences. In Pyropia yezoensis (Susabi-nori), this protein is Ribonuclease E/G-like protein (rne).